The sequence spans 32 residues: Photosystem II reaction center protein T (32 aa).

The helical transmembrane segment at 3-23 (ALVYTFLLIGTLVVIFFAIFF) threads the bilayer.

This sequence belongs to the PsbT family. In terms of assembly, PSII is composed of 1 copy each of membrane proteins PsbA, PsbB, PsbC, PsbD, PsbE, PsbF, PsbH, PsbI, PsbJ, PsbK, PsbL, PsbM, PsbT, PsbX, PsbY, PsbZ, Psb30/Ycf12, at least 3 peripheral proteins of the oxygen-evolving complex and a large number of cofactors. It forms dimeric complexes.

Its subcellular location is the plastid. It is found in the chloroplast thylakoid membrane. In terms of biological role, found at the monomer-monomer interface of the photosystem II (PS II) dimer, plays a role in assembly and dimerization of PSII. PSII is a light-driven water plastoquinone oxidoreductase, using light energy to abstract electrons from H(2)O, generating a proton gradient subsequently used for ATP formation. This Emiliania huxleyi (Coccolithophore) protein is Photosystem II reaction center protein T.